A 352-amino-acid polypeptide reads, in one-letter code: Protein-glutamate methylesterase/protein-glutamine glutaminase 2 (352 aa).

Residues methionine 1–glutamate 116 enclose the Response regulatory domain. Aspartate 50 bears the 4-aspartylphosphate mark. A CheB-type methylesterase domain is found at alanine 162–glutamine 352. Active-site residues include serine 174, histidine 200, and aspartate 296.

Belongs to the CheB family. In terms of processing, phosphorylated by CheA. Phosphorylation of the N-terminal regulatory domain activates the methylesterase activity.

The protein resides in the cytoplasm. The enzyme catalyses [protein]-L-glutamate 5-O-methyl ester + H2O = L-glutamyl-[protein] + methanol + H(+). It catalyses the reaction L-glutaminyl-[protein] + H2O = L-glutamyl-[protein] + NH4(+). Involved in chemotaxis. Part of a chemotaxis signal transduction system that modulates chemotaxis in response to various stimuli. Catalyzes the demethylation of specific methylglutamate residues introduced into the chemoreceptors (methyl-accepting chemotaxis proteins or MCP) by CheR. Also mediates the irreversible deamidation of specific glutamine residues to glutamic acid. The protein is Protein-glutamate methylesterase/protein-glutamine glutaminase 2 of Xanthomonas axonopodis pv. citri (strain 306).